The following is a 274-amino-acid chain: 2,3,4,5-tetrahydropyridine-2,6-dicarboxylate N-succinyltransferase (274 aa).

Positions 104 and 141 each coordinate substrate.

This sequence belongs to the transferase hexapeptide repeat family. In terms of assembly, homotrimer.

The protein localises to the cytoplasm. The enzyme catalyses (S)-2,3,4,5-tetrahydrodipicolinate + succinyl-CoA + H2O = (S)-2-succinylamino-6-oxoheptanedioate + CoA. It functions in the pathway amino-acid biosynthesis; L-lysine biosynthesis via DAP pathway; LL-2,6-diaminopimelate from (S)-tetrahydrodipicolinate (succinylase route): step 1/3. This Serratia proteamaculans (strain 568) protein is 2,3,4,5-tetrahydropyridine-2,6-dicarboxylate N-succinyltransferase.